The following is a 145-amino-acid chain: Allergen MAG29 (145 aa).

Disordered regions lie at residues 1-21 (KDDI…DDKQ) and 103-145 (AGGA…EEVD). Residues 104–137 (GGAGAGGMPGGFPGGFPGTDGSGGGAAGGDGGKS) show a composition bias toward gly residues.

It belongs to the heat shock protein 70 family.

The polypeptide is Allergen MAG29 (MAG29) (Dermatophagoides farinae (American house dust mite)).